A 238-amino-acid chain; its full sequence is tRNA (guanine-N(7)-)-methyltransferase (238 aa).

S-adenosyl-L-methionine contacts are provided by E68, E93, D120, and D143. Residue D143 is part of the active site. Substrate is bound by residues K147, D179, and 216–219 (TKFE).

It belongs to the class I-like SAM-binding methyltransferase superfamily. TrmB family. In terms of assembly, monomer.

It carries out the reaction guanosine(46) in tRNA + S-adenosyl-L-methionine = N(7)-methylguanosine(46) in tRNA + S-adenosyl-L-homocysteine. It functions in the pathway tRNA modification; N(7)-methylguanine-tRNA biosynthesis. Catalyzes the formation of N(7)-methylguanine at position 46 (m7G46) in tRNA. The protein is tRNA (guanine-N(7)-)-methyltransferase of Edwardsiella ictaluri (strain 93-146).